The sequence spans 91 residues: Small ribosomal subunit protein uS19 (91 aa).

It belongs to the universal ribosomal protein uS19 family.

Protein S19 forms a complex with S13 that binds strongly to the 16S ribosomal RNA. The protein is Small ribosomal subunit protein uS19 of Bordetella avium (strain 197N).